Here is a 290-residue protein sequence, read N- to C-terminus: 2-dehydropantoate 2-reductase (290 aa).

NADP(+) contacts are provided by residues 8–13 (GPGAVG), N98, and A124. A substrate-binding site is contributed by N98. The Proton donor role is filled by K175. Residues N179 and S244 each coordinate substrate. E256 contributes to the NADP(+) binding site.

The protein belongs to the ketopantoate reductase family.

Its subcellular location is the cytoplasm. The enzyme catalyses (R)-pantoate + NADP(+) = 2-dehydropantoate + NADPH + H(+). It participates in cofactor biosynthesis; (R)-pantothenate biosynthesis; (R)-pantoate from 3-methyl-2-oxobutanoate: step 2/2. Functionally, catalyzes the NADPH-dependent reduction of ketopantoate into pantoic acid. This chain is 2-dehydropantoate 2-reductase, found in Caulobacter vibrioides (strain ATCC 19089 / CIP 103742 / CB 15) (Caulobacter crescentus).